The following is a 150-amino-acid chain: D-aminoacyl-tRNA deacylase (150 aa).

Residues Gly-138–Pro-139 carry the Gly-cisPro motif, important for rejection of L-amino acids motif.

The protein belongs to the DTD family. As to quaternary structure, homodimer.

The protein resides in the cytoplasm. It catalyses the reaction glycyl-tRNA(Ala) + H2O = tRNA(Ala) + glycine + H(+). It carries out the reaction a D-aminoacyl-tRNA + H2O = a tRNA + a D-alpha-amino acid + H(+). In terms of biological role, an aminoacyl-tRNA editing enzyme that deacylates mischarged D-aminoacyl-tRNAs. Also deacylates mischarged glycyl-tRNA(Ala), protecting cells against glycine mischarging by AlaRS. Acts via tRNA-based rather than protein-based catalysis; rejects L-amino acids rather than detecting D-amino acids in the active site. By recycling D-aminoacyl-tRNA to D-amino acids and free tRNA molecules, this enzyme counteracts the toxicity associated with the formation of D-aminoacyl-tRNA entities in vivo and helps enforce protein L-homochirality. This Opitutus terrae (strain DSM 11246 / JCM 15787 / PB90-1) protein is D-aminoacyl-tRNA deacylase.